We begin with the raw amino-acid sequence, 263 residues long: MIVERIWTGNAYRNFNYLIACPETGEALAIDPLDHEKTLATARVKGWQITQVLNTHEHHDHTGGNAAVIAATGAKLIAHHKAGGRIAGVDRGVKAGDVIKVGKTVELECLDTPGHTMCHICLRSHTEQPALFSGDTLFNAGAGNVHNGGDVNALYATFAEQLARLPDDTLVYPGHDYIENNLRFTLAREPDNAAAKALLPSVTDHDPAKSAVTTLKDEKEFNTFLRLSSPSVIARLRESFPDLPDEPDARTVFAKLRELRNQW.

7 residues coordinate Zn(2+): H56, H58, D60, H61, H115, D135, and H175.

The protein belongs to the metallo-beta-lactamase superfamily. Glyoxalase II family. In terms of assembly, monomer. It depends on Zn(2+) as a cofactor.

The enzyme catalyses an S-(2-hydroxyacyl)glutathione + H2O = a 2-hydroxy carboxylate + glutathione + H(+). Its pathway is secondary metabolite metabolism; methylglyoxal degradation; (R)-lactate from methylglyoxal: step 2/2. Its function is as follows. Thiolesterase that catalyzes the hydrolysis of S-D-lactoyl-glutathione to form glutathione and D-lactic acid. The polypeptide is Hydroxyacylglutathione hydrolase (Polaromonas sp. (strain JS666 / ATCC BAA-500)).